Reading from the N-terminus, the 206-residue chain is Regulatory protein CysR (206 aa).

Residues 120–196 form the HTH crp-type domain; sequence RRAEAKLASL…DRALIVRYPE (77 aa). A DNA-binding region (H-T-H motif) is located at residues 156-175; sequence HQVIAELSGSTRVTTTRLLG.

It localises to the cytoplasm. In terms of biological role, probably regulates the expression of genes from the sulfate permease complex. This chain is Regulatory protein CysR (cysR), found in Synechococcus elongatus (strain ATCC 33912 / PCC 7942 / FACHB-805) (Anacystis nidulans R2).